Here is a 1030-residue protein sequence, read N- to C-terminus: MMS19 nucleotide excision repair protein homolog (1030 aa).

Ala2 is modified (N-acetylalanine). HEAT repeat units lie at residues 866–904 (QRFFTDNVPALVRGFHAAPQDVKPNYLKGLSHVLNRLPK), 908–946 (LPELPTLLSLLLEALSCPDSVVQLSTLSCLQPLLLEAPQ), 949–987 (SLHVDTLITKFLNLSASPSMAVRIAALQCMHALTRLPTP), and 990–1028 (LPYKPQVIRALAKPLDDKKRLVRKEAVSARGEWFLLGSP). Ser1027 is modified (phosphoserine).

Belongs to the MET18/MMS19 family. In terms of assembly, component of the CIA complex. In the CIA complex, interacts directly with CIAO2B and CIAO3. Component of the MMXD complex, composed of CIAO1, ERCC2, CIAO2B, MMS19 and SLC25A5. Interacts with CIAO2B; the interaction is direct. Interacts with ERCC2/XPD; the interaction is direct. Interacts with ERCC3/XPB and NCOA3/RAC3. Interacts with RTEL1; the interaction mediates the association of RTEL1 with the CIA complex. Interacts with BRIP1. Interacts with KIF4A; the interaction facilitates the transfer of Fe-S clusters to KIF4A to ensure proper localization of KIF4A to the mitotic machinery components. Interacts with CCDC117; the interaction is indirect. Ubiquitinated; undergoes 'Lys-48'-linked polyubiquitination.

Its subcellular location is the nucleus. The protein localises to the cytoplasm. It localises to the cytoskeleton. The protein resides in the spindle. In terms of biological role, key component of the cytosolic iron-sulfur protein assembly (CIA) complex, a multiprotein complex that mediates the incorporation of iron-sulfur cluster into apoproteins specifically involved in DNA metabolism and genomic integrity. In the CIA complex, MMS19 acts as an adapter between early-acting CIA components and a subset of cellular target Fe/S proteins such as ERCC2/XPD, FANCJ and RTEL1, thereby playing a key role in nucleotide excision repair (NER), homologous recombination-mediated double-strand break DNA repair, DNA replication and RNA polymerase II (POL II) transcription. As a CIA complex component and in collaboration with CIAO1 and CIAO2, binds to and facilitates the assembly of most cytosolic-nuclear Fe/S proteins. As part of the mitotic spindle-associated MMXD complex, plays a role in chromosome segregation, probably by facilitating iron-sulfur cluster assembly into ERCC2/XPD. Together with CIAO2, facilitates the transfer of Fe-S clusters to the motor protein KIF4A, which ensures proper localization of KIF4A to mitotic machinery components to promote the progression of mitosis. Indirectly acts as a transcriptional coactivator of estrogen receptor (ER), via its role in iron-sulfur insertion into some component of the TFIIH-machinery. The sequence is that of MMS19 nucleotide excision repair protein homolog from Bos taurus (Bovine).